We begin with the raw amino-acid sequence, 201 residues long: Small ribosomal subunit protein uS4c (201 aa).

The tract at residues 15-44 is disordered; the sequence is LGALPGLTNKRPRAGSDLRNQSRSGKKSQY. The 61-residue stretch at 89–149 folds into the S4 RNA-binding domain; the sequence is MRLDNILFRL…DEQKSRALIQ (61 aa).

This sequence belongs to the universal ribosomal protein uS4 family. As to quaternary structure, part of the 30S ribosomal subunit. Contacts protein S5. The interaction surface between S4 and S5 is involved in control of translational fidelity.

It is found in the plastid. The protein resides in the chloroplast. In terms of biological role, one of the primary rRNA binding proteins, it binds directly to 16S rRNA where it nucleates assembly of the body of the 30S subunit. Its function is as follows. With S5 and S12 plays an important role in translational accuracy. The polypeptide is Small ribosomal subunit protein uS4c (rps4) (Helianthus annuus (Common sunflower)).